The sequence spans 151 residues: Deoxyuridine 5'-triphosphate nucleotidohydrolase (151 aa).

Substrate-binding positions include 71 to 73 (RSG), asparagine 84, and 88 to 90 (TID).

This sequence belongs to the dUTPase family. Mg(2+) is required as a cofactor.

The catalysed reaction is dUTP + H2O = dUMP + diphosphate + H(+). Its pathway is pyrimidine metabolism; dUMP biosynthesis; dUMP from dCTP (dUTP route): step 2/2. Functionally, this enzyme is involved in nucleotide metabolism: it produces dUMP, the immediate precursor of thymidine nucleotides and it decreases the intracellular concentration of dUTP so that uracil cannot be incorporated into DNA. The sequence is that of Deoxyuridine 5'-triphosphate nucleotidohydrolase from Gluconobacter oxydans (strain 621H) (Gluconobacter suboxydans).